The sequence spans 135 residues: T-cell receptor beta chain V region 3H.25 (135 aa).

Positions 1-20 (MATRLLCYTVLCLLGARILN) are cleaved as a signal peptide. Residues 21–115 (SKVIQTPRYL…SALYLCASSL (95 aa)) are v segment. A disulfide bond links cysteine 42 and cysteine 111. Positions 116–118 (FGT) are d segment. A j segment region spans residues 119–135 (SDYTFGSGTRLLVIGKA).

This Mus musculus (Mouse) protein is T-cell receptor beta chain V region 3H.25.